Here is a 227-residue protein sequence, read N- to C-terminus: Cytidylate kinase (227 aa).

12–20 (GPSGAGKGT) is a binding site for ATP.

It belongs to the cytidylate kinase family. Type 1 subfamily.

The protein resides in the cytoplasm. The enzyme catalyses CMP + ATP = CDP + ADP. It carries out the reaction dCMP + ATP = dCDP + ADP. The polypeptide is Cytidylate kinase (Photorhabdus laumondii subsp. laumondii (strain DSM 15139 / CIP 105565 / TT01) (Photorhabdus luminescens subsp. laumondii)).